Consider the following 888-residue polypeptide: Leukocyte tyrosine kinase receptor (888 aa).

The signal sequence occupies residues 1-16 (MGCSHRLLLWLGAAGT). At 17–421 (ILCSNSEFQT…CMDLPTTASP (405 aa)) the chain is on the extracellular side. 2 cysteine pairs are disulfide-bonded: cysteine 73/cysteine 86 and cysteine 168/cysteine 179. Residues 226–294 (LVAAGGGGRS…RSPREGAEGG (69 aa)) are disordered. Gly residues predominate over residues 260 to 273 (GSGGRGGAAGGGSG). Cysteine 297 and cysteine 319 form a disulfide bridge. Asparagine 377 and asparagine 409 each carry an N-linked (GlcNAc...) asparagine glycan. A helical transmembrane segment spans residues 422–446 (LILMGAVVAALALSLLMMCAVLILV). At 447–888 (NQKCQGLWGT…SSSSSIPGIQ (442 aa)) the chain is on the cytoplasmic side. The 277-residue stretch at 506–782 (VTLLRALGHG…IQYCTQDPDV (277 aa)) folds into the Protein kinase domain. ATP is bound by residues 512–520 (LGHGAFGEV) and lysine 540. Aspartate 639 acts as the Proton acceptor in catalysis. Tyrosine 672 carries the post-translational modification Phosphotyrosine; by autocatalysis. Residues 857 to 888 (TYGSWTPRGPQGEDTGIEHCNGSSSSSIPGIQ) are disordered. Positions 877-888 (NGSSSSSIPGIQ) are enriched in polar residues.

This sequence belongs to the protein kinase superfamily. Tyr protein kinase family. Insulin receptor subfamily. As to quaternary structure, homodimer; homodimerizes following ligand-binding. Part of a complex including LTK, TNK2 and GRB2, in which GRB2 promotes LTK recruitment by TNK2. Phosphorylated at tyrosine residues by autocatalysis, which activates kinase activity. Subsets of lymphoid and neuronal cells.

The protein resides in the cell membrane. Its subcellular location is the endoplasmic reticulum. It carries out the reaction L-tyrosyl-[protein] + ATP = O-phospho-L-tyrosyl-[protein] + ADP + H(+). Its activity is regulated as follows. Activated by ligand-binding, leading to homodimerization and autophosphorylation. Receptor with a tyrosine-protein kinase activity. Following activation by ALKAL1 or ALKAL2 ligands at the cell surface, transduces an extracellular signal into an intracellular response. Ligand-binding to the extracellular domain induces tyrosine kinase activation, leading to activation of the mitogen-activated protein kinase (MAPK) pathway. Phosphorylates almost exclusively at the first tyrosine of the Y-x-x-x-Y-Y motif. The exact function of this protein is not known; studies with chimeric proteins demonstrate its ability to promote growth and specifically neurite outgrowth, and cell survival. Involved in regulation of the secretory pathway involving endoplasmic reticulum (ER) export sites (ERESs) and ER to Golgi transport. The chain is Leukocyte tyrosine kinase receptor from Mus musculus (Mouse).